We begin with the raw amino-acid sequence, 226 residues long: ATP synthase F(0) complex subunit a (226 aa).

The next 6 membrane-spanning stretches (helical) occupy residues 6–26, 68–88, 97–117, 138–158, 164–184, and 189–209; these read FASF…IIMF, WSLM…LGLL, QLSM…ITGF, IPML…ALAV, ITAG…LTSI, and AILT…VALI.

It belongs to the ATPase A chain family. Component of the ATP synthase complex composed at least of ATP5F1A/subunit alpha, ATP5F1B/subunit beta, ATP5MC1/subunit c (homooctomer), MT-ATP6/subunit a, MT-ATP8/subunit 8, ATP5ME/subunit e, ATP5MF/subunit f, ATP5MG/subunit g, ATP5MK/subunit k, ATP5MJ/subunit j, ATP5F1C/subunit gamma, ATP5F1D/subunit delta, ATP5F1E/subunit epsilon, ATP5PF/subunit F6, ATP5PB/subunit b, ATP5PD/subunit d, ATP5PO/subunit OSCP. ATP synthase complex consists of a soluble F(1) head domain (subunits alpha(3) and beta(3)) - the catalytic core - and a membrane F(0) domain - the membrane proton channel (subunits c, a, 8, e, f, g, k and j). These two domains are linked by a central stalk (subunits gamma, delta, and epsilon) rotating inside the F1 region and a stationary peripheral stalk (subunits F6, b, d, and OSCP). Interacts with DNAJC30; interaction is direct.

The protein resides in the mitochondrion inner membrane. It catalyses the reaction H(+)(in) = H(+)(out). Functionally, subunit a, of the mitochondrial membrane ATP synthase complex (F(1)F(0) ATP synthase or Complex V) that produces ATP from ADP in the presence of a proton gradient across the membrane which is generated by electron transport complexes of the respiratory chain. ATP synthase complex consist of a soluble F(1) head domain - the catalytic core - and a membrane F(1) domain - the membrane proton channel. These two domains are linked by a central stalk rotating inside the F(1) region and a stationary peripheral stalk. During catalysis, ATP synthesis in the catalytic domain of F(1) is coupled via a rotary mechanism of the central stalk subunits to proton translocation. With the subunit c (ATP5MC1), forms the proton-conducting channel in the F(0) domain, that contains two crucial half-channels (inlet and outlet) that facilitate proton movement from the mitochondrial intermembrane space (IMS) into the matrix. Protons are taken up via the inlet half-channel and released through the outlet half-channel, following a Grotthuss mechanism. This Ictidomys tridecemlineatus (Thirteen-lined ground squirrel) protein is ATP synthase F(0) complex subunit a.